The primary structure comprises 241 residues: Small ribosomal subunit protein uS3 (241 aa).

The KH type-2 domain maps to 39-107 (IREILHKELK…DVVINIVEIR (69 aa)). Residues 217–241 (KRMAEGETGGGGDRGGRQRRDNAAV) are disordered. Residues 230–241 (RGGRQRRDNAAV) are compositionally biased toward basic and acidic residues.

It belongs to the universal ribosomal protein uS3 family. Part of the 30S ribosomal subunit. Forms a tight complex with proteins S10 and S14.

Its function is as follows. Binds the lower part of the 30S subunit head. Binds mRNA in the 70S ribosome, positioning it for translation. This is Small ribosomal subunit protein uS3 from Bradyrhizobium diazoefficiens (strain JCM 10833 / BCRC 13528 / IAM 13628 / NBRC 14792 / USDA 110).